A 77-amino-acid polypeptide reads, in one-letter code: UPF0346 protein lin1971 (77 aa).

It belongs to the UPF0346 family.

The protein is UPF0346 protein lin1971 of Listeria innocua serovar 6a (strain ATCC BAA-680 / CLIP 11262).